Reading from the N-terminus, the 435-residue chain is 26S proteasome regulatory subunit 7 (435 aa).

Residues methionine 1–asparagine 23 show a composition bias toward basic and acidic residues. Residues methionine 1–phenylalanine 24 form a disordered region. Glycine 218–threonine 225 provides a ligand contact to ATP.

This sequence belongs to the AAA ATPase family.

The protein resides in the cytoplasm. It is found in the nucleus. Its function is as follows. The 26S proteasome is involved in the ATP-dependent degradation of ubiquitinated proteins. The regulatory (or ATPase) complex confers ATP dependency and substrate specificity to the 26S complex. In Caenorhabditis elegans, this protein is 26S proteasome regulatory subunit 7 (rpt-1).